The sequence spans 447 residues: Acyl-CoA (8-3)-desaturase (447 aa).

Position 1 is an N-acetylmethionine (Met-1). Topologically, residues Met-1–Arg-124 are cytoplasmic. The region spanning Thr-19–Ala-97 is the Cytochrome b5 heme-binding domain. Residues Met-125–Leu-145 form a helical membrane-spanning segment. The Lumenal segment spans residues Asp-146 to Leu-160. A helical membrane pass occupies residues Val-161–Leu-180. The Cytoplasmic segment spans residues Gln-181–Tyr-268. Positions His-182 to His-186 match the Histidine box-1 motif. The short motif at His-219–His-223 is the Histidine box-2 element. Residues Phe-269–Phe-289 form a helical membrane-spanning segment. The Lumenal portion of the chain corresponds to Val-290–Arg-308. The helical transmembrane segment at Ile-309–Val-329 threads the bilayer. Over Arg-330–Gln-447 the chain is Cytoplasmic. Residues Gln-385 to His-389 carry the Histidine box-3 motif.

This sequence belongs to the fatty acid desaturase type 1 family. In terms of tissue distribution, highly expressed in the adrenal gland, liver, brain, and testis, tissues where lipogenesis and steroidogenesis are active. Expressed in colonic mucosa.

It localises to the endoplasmic reticulum membrane. The protein localises to the mitochondrion. The catalysed reaction is (8Z,11Z,14Z)-eicosatrienoyl-CoA + 2 Fe(II)-[cytochrome b5] + O2 + 2 H(+) = (5Z,8Z,11Z,14Z)-eicosatetraenoyl-CoA + 2 Fe(III)-[cytochrome b5] + 2 H2O. It catalyses the reaction (8Z,11Z,14Z,17Z)-eicosatetraenoyl-CoA + 2 Fe(II)-[cytochrome b5] + O2 + 2 H(+) = (5Z,8Z,11Z,14Z,17Z)-eicosapentaenoyl-CoA + 2 Fe(III)-[cytochrome b5] + 2 H2O. It carries out the reaction (11E)-octadecenoyl-CoA + 2 Fe(II)-[cytochrome b5] + O2 + 2 H(+) = (5Z,11E)-octadecadienoyl-CoA + 2 Fe(III)-[cytochrome b5] + 2 H2O. It functions in the pathway lipid metabolism; polyunsaturated fatty acid biosynthesis. Functionally, acts as a front-end fatty acyl-coenzyme A (CoA) desaturase that introduces a cis double bond at carbon 5 located between a preexisting double bond and the carboxyl end of the fatty acyl chain. Involved in biosynthesis of highly unsaturated fatty acids (HUFA) from the essential polyunsaturated fatty acids (PUFA) linoleic acid (LA) (18:2n-6) and alpha-linolenic acid (ALA) (18:3n-3) precursors. Specifically, desaturates dihomo-gamma-linoleoate (DGLA) (20:3n-6) and eicosatetraenoate (ETA) (20:4n-3) to generate arachidonate (AA) (20:4n-6) and eicosapentaenoate (EPA) (20:5n-3), respectively. As a rate limiting enzyme for DGLA (20:3n-6) and AA (20:4n-6)-derived eicosanoid biosynthesis, controls the metabolism of inflammatory lipids like prostaglandin E2, critical for efficient acute inflammatory response and maintenance of epithelium homeostasis. Contributes to membrane phospholipid biosynthesis by providing AA (20:4n-6) as a major acyl chain esterified into phospholipids. In particular, regulates phosphatidylinositol-4,5-bisphosphate levels, modulating inflammatory cytokine production in T-cells. Also desaturates (11E)-octadecenoate (trans-vaccenoate)(18:1n-9), a metabolite in the biohydrogenation pathway of LA (18:2n-6). The polypeptide is Acyl-CoA (8-3)-desaturase (Mus musculus (Mouse)).